We begin with the raw amino-acid sequence, 187 residues long: Threonylcarbamoyl-AMP synthase (187 aa).

The 184-residue stretch at 4 to 187 (TLTLSEAVTA…DARSGHILRL (184 aa)) folds into the YrdC-like domain.

The protein belongs to the SUA5 family. TsaC subfamily.

The protein resides in the cytoplasm. The catalysed reaction is L-threonine + hydrogencarbonate + ATP = L-threonylcarbamoyladenylate + diphosphate + H2O. In terms of biological role, required for the formation of a threonylcarbamoyl group on adenosine at position 37 (t(6)A37) in tRNAs that read codons beginning with adenine. Catalyzes the conversion of L-threonine, HCO(3)(-)/CO(2) and ATP to give threonylcarbamoyl-AMP (TC-AMP) as the acyladenylate intermediate, with the release of diphosphate. In Xylella fastidiosa (strain M12), this protein is Threonylcarbamoyl-AMP synthase.